A 441-amino-acid chain; its full sequence is Probable acetylornithine aminotransferase, mitochondrial (441 aa).

Lys-294 is modified (N6-(pyridoxal phosphate)lysine).

Belongs to the class-III pyridoxal-phosphate-dependent aminotransferase family. It depends on pyridoxal 5'-phosphate as a cofactor.

Its subcellular location is the mitochondrion matrix. The enzyme catalyses N(2)-acetyl-L-ornithine + 2-oxoglutarate = N-acetyl-L-glutamate 5-semialdehyde + L-glutamate. Its pathway is amino-acid biosynthesis; L-arginine biosynthesis; N(2)-acetyl-L-ornithine from L-glutamate: step 4/4. The protein is Probable acetylornithine aminotransferase, mitochondrial (arg1) of Schizosaccharomyces pombe (strain 972 / ATCC 24843) (Fission yeast).